The sequence spans 330 residues: Beta-ketoacyl-[acyl-carrier-protein] synthase III (330 aa).

Catalysis depends on residues Cys114 and His255. Residues 256–260 (QANQR) form an ACP-binding region. Asn285 is an active-site residue.

Belongs to the thiolase-like superfamily. FabH family. Homodimer.

The protein resides in the cytoplasm. It catalyses the reaction malonyl-[ACP] + acetyl-CoA + H(+) = 3-oxobutanoyl-[ACP] + CO2 + CoA. The protein operates within lipid metabolism; fatty acid biosynthesis. In terms of biological role, catalyzes the condensation reaction of fatty acid synthesis by the addition to an acyl acceptor of two carbons from malonyl-ACP. Catalyzes the first condensation reaction which initiates fatty acid synthesis and may therefore play a role in governing the total rate of fatty acid production. Possesses both acetoacetyl-ACP synthase and acetyl transacylase activities. Its substrate specificity determines the biosynthesis of branched-chain and/or straight-chain of fatty acids. This chain is Beta-ketoacyl-[acyl-carrier-protein] synthase III, found in Nostoc sp. (strain PCC 7120 / SAG 25.82 / UTEX 2576).